Consider the following 343-residue polypeptide: Heat-inducible transcription repressor HrcA (343 aa).

This sequence belongs to the HrcA family.

In terms of biological role, negative regulator of class I heat shock genes (grpE-dnaK-dnaJ and groELS operons). Prevents heat-shock induction of these operons. In Bacillus subtilis (strain 168), this protein is Heat-inducible transcription repressor HrcA.